The following is a 366-amino-acid chain: Heat-inducible transcription repressor HrcA (366 aa).

Over residues 298 to 309 (SSGYGQSSTPSA) the composition is skewed to polar residues. Positions 298–318 (SSGYGQSSTPSANVEHEEYDT) are disordered.

The protein belongs to the HrcA family.

Functionally, negative regulator of class I heat shock genes (grpE-dnaK-dnaJ and groELS operons). Prevents heat-shock induction of these operons. This Bifidobacterium animalis subsp. lactis (strain AD011) protein is Heat-inducible transcription repressor HrcA.